A 192-amino-acid polypeptide reads, in one-letter code: Xanthine phosphoribosyltransferase (192 aa).

2 residues coordinate xanthine: Leu20 and Asn27. 128–132 lines the 5-phospho-alpha-D-ribose 1-diphosphate pocket; the sequence is ANGDA. Lys156 is a binding site for xanthine.

Belongs to the purine/pyrimidine phosphoribosyltransferase family. Xpt subfamily. Homodimer.

Its subcellular location is the cytoplasm. It carries out the reaction XMP + diphosphate = xanthine + 5-phospho-alpha-D-ribose 1-diphosphate. Its pathway is purine metabolism; XMP biosynthesis via salvage pathway; XMP from xanthine: step 1/1. Converts the preformed base xanthine, a product of nucleic acid breakdown, to xanthosine 5'-monophosphate (XMP), so it can be reused for RNA or DNA synthesis. The chain is Xanthine phosphoribosyltransferase from Staphylococcus aureus (strain Mu3 / ATCC 700698).